Here is an 865-residue protein sequence, read N- to C-terminus: DNA-directed RNA polymerase subunit Rpo1N (865 aa).

Cysteine 60, cysteine 63, cysteine 70, histidine 73, cysteine 100, cysteine 103, cysteine 146, and cysteine 149 together coordinate Zn(2+). Residues aspartate 451, aspartate 453, and aspartate 455 each contribute to the Mg(2+) site. The disordered stretch occupies residues 500-531; sequence EHTSSQGKRLFSVRSRPPDPQEGRAPPPDREG. The span at 515 to 531 shows a compositional bias: basic and acidic residues; that stretch reads RPPDPQEGRAPPPDREG.

The protein belongs to the RNA polymerase beta' chain family. As to quaternary structure, part of the RNA polymerase complex. Mg(2+) is required as a cofactor. Requires Zn(2+) as cofactor.

It is found in the cytoplasm. The catalysed reaction is RNA(n) + a ribonucleoside 5'-triphosphate = RNA(n+1) + diphosphate. DNA-dependent RNA polymerase (RNAP) catalyzes the transcription of DNA into RNA using the four ribonucleoside triphosphates as substrates. Forms the clamp head domain. The polypeptide is DNA-directed RNA polymerase subunit Rpo1N (Methanothermobacter thermautotrophicus (strain Winter) (Methanobacterium thermoautotrophicum)).